Consider the following 315-residue polypeptide: DNA-directed RNA polymerase subunit alpha (315 aa).

The alpha N-terminal domain (alpha-NTD) stretch occupies residues 1–228 (MLEIEKPVIQ…EHFKLFMTLT (228 aa)). Residues 245–315 (KEKALEMTIE…LGLNLRLNDE (71 aa)) form an alpha C-terminal domain (alpha-CTD) region.

The protein belongs to the RNA polymerase alpha chain family. In terms of assembly, homodimer. The RNAP catalytic core consists of 2 alpha, 1 beta, 1 beta' and 1 omega subunit. When a sigma factor is associated with the core the holoenzyme is formed, which can initiate transcription.

It carries out the reaction RNA(n) + a ribonucleoside 5'-triphosphate = RNA(n+1) + diphosphate. Its function is as follows. DNA-dependent RNA polymerase catalyzes the transcription of DNA into RNA using the four ribonucleoside triphosphates as substrates. This is DNA-directed RNA polymerase subunit alpha from Clostridium perfringens (strain ATCC 13124 / DSM 756 / JCM 1290 / NCIMB 6125 / NCTC 8237 / Type A).